The primary structure comprises 523 residues: 2-oxopropyl-CoM reductase, carboxylating (523 aa).

An FAD-binding site is contributed by 53-54 (AA). A 2-oxopropyl-coenzyme M-binding site is contributed by Arg56. Ser81 is a binding site for FAD. Cys82 serves as a coordination point for 2-oxopropyl-coenzyme M. Cys82 and Cys87 are disulfide-bonded. Ala158 contacts FAD. NADP(+)-binding positions include 222–225 (GSKT) and 245–246 (RT). Asp353 lines the FAD pocket. NADP(+) is bound at residue Glu360. Met361 contacts FAD. 2-oxopropyl-coenzyme M is bound at residue Arg365. An FAD-binding site is contributed by Phe501.

It belongs to the class-I pyridine nucleotide-disulfide oxidoreductase family. As to quaternary structure, homodimer. Component II of the aliphatic epoxide carboxylation complex together with components I, III and IV. FAD is required as a cofactor.

It catalyses the reaction coenzyme M + acetoacetate + NADP(+) = 2-oxopropyl-coenzyme M + CO2 + NADPH. It functions in the pathway alkene metabolism; propylene degradation. Inhibited (at 40%) by the coenzyme M analog 2-bromoethanesulfonate (BES). BES is a time-dependent inactivator of dithiothreitol-reduced 2-KPCC, where the redox active cysteines are in the free thiol forms. BES does not inactivate air-oxidized 2-KPCC, where the redox active cysteine pair is in the disulfide form. BES specifically alkylates the interchange thiol that facilitates thioether bond cleavage and enolacetone formation during catalysis. Involved in aliphatic epoxide carboxylation. Catalyzes the reductive cleavage of the thioether bond of 2-oxopropyl-coenzyme M (2-KPC), and the subsequent carboxylation of the ketopropyl cleavage product, yielding the products acetoacetate and free coenzyme M. The chain is 2-oxopropyl-CoM reductase, carboxylating from Xanthobacter autotrophicus (strain ATCC BAA-1158 / Py2).